The primary structure comprises 3312 residues: Cadherin EGF LAG seven-pass G-type receptor 3 (3312 aa).

Positions 1 to 32 (MMARRPPWRGLGGRSTPILLLLLLSLFPLSQE) are cleaved as a signal peptide. The Extracellular portion of the chain corresponds to 33–2540 (ELGGGGHQGW…RLEGDLELLA (2508 aa)). Disordered regions lie at residues 90-112 (GRRQ…LGIE), 143-199 (GRTG…RKRV), and 212-306 (GSKG…EARK). The segment covering 159–173 (SSGVPGSGNSSPLPS) has biased composition (low complexity). Residues 290-299 (RPGPRPPGLP) are compositionally biased toward pro residues. 9 consecutive Cadherin domains span residues 326 to 433 (PQYN…SPVF), 434 to 545 (EQAQ…APQF), 546 to 651 (SEKR…IPIF), 652 to 756 (VSTP…RPEF), 757 to 858 (TMKE…RPVF), 859 to 961 (QSAH…APQF), 962 to 1067 (VASH…APVF), 1068 to 1169 (PAEE…SPVL), and 1170 to 1265 (NNFQ…RVVI). N632 is a glycosylation site (N-linked (GlcNAc...) asparagine). N847 is a glycosylation site (N-linked (GlcNAc...) asparagine). 4 N-linked (GlcNAc...) asparagine glycosylation sites follow: N1182, N1222, N1317, and N1327. The EGF-like 1; calcium-binding domain maps to 1375-1433 (DDNVCLREPCENYMKCVSVLRFDSSAPFLASASTLFRPIQPIAGLRCRCPPGFTGDFCE). Cystine bridges form between C1379–C1390, C1384–C1421, C1423–C1432, C1439–C1450, C1444–C1459, C1461–C1470, C1479–C1490, C1484–C1500, and C1502–C1513. Residues 1435–1471 (ELDLCYSNPCRNGGACARREGGYTCVCRPRFTGEDCE) enclose the EGF-like 2; calcium-binding domain. Positions 1475-1514 (EAGRCVPGVCRNGGTCTDAPNGGFRCQCPAGGAFEGPRCE) constitute an EGF-like 3; calcium-binding domain. In terms of domain architecture, Laminin G-like 1 spans 1515–1719 (VAARSFPPSS…VANNGTMAGC (205 aa)). Residues N1649 and N1713 are each glycosylated (N-linked (GlcNAc...) asparagine). 4 disulfides stabilise this stretch: C1693-C1719, C1726-C1737, C1731-C1746, and C1748-C1757. The 37-residue stretch at 1722–1758 (KLHFCDSGPCKNSGFCSERWGSFSCDCPVGFGGKDCQ) folds into the EGF-like 4; calcium-binding domain. One can recognise a Laminin G-like 2 domain in the interval 1764–1944 (PHHFRGNGTL…SHRVNAEPGC (181 aa)). The N-linked (GlcNAc...) asparagine glycan is linked to N1770. 9 cysteine pairs are disulfide-bonded: C1915/C1944, C1950/C1961, C1955/C1970, C1972/C1981, C1985/C1996, C1990/C2008, C2010/C2019, C2027/C2040, and C2042/C2052. Residues 1946 to 1982 (VTNACASGPCPPHADCRDLWQTFSCTCQPGYYGPGCV) form the EGF-like 5; calcium-binding domain. Residue D1963 is modified to (3R)-3-hydroxyaspartate. The EGF-like 6; calcium-binding domain maps to 1983–2020 (DACLLNPCQNQGSCRHLPGAPHGYTCDCVGGYFGHHCE). The 33-residue stretch at 2021–2053 (HRMDQQCPRGWWGSPTCGPCNCDVHKGFDPNCN) folds into the EGF-like 7; calcium-binding domain. An N-linked (GlcNAc...) asparagine glycan is attached at N2053. Residues 2055 to 2090 (TNGQCHCKEFHYRPRGSDSCLPCDCYPVGSTSRSCA) form the EGF-like 8; calcium-binding domain. 5 disulfides stabilise this stretch: C2059/C2074, C2061/C2077, C2079/C2089, C2098/C2107, and C2110/C2122. The region spanning 2077 to 2124 (CDCYPVGSTSRSCAPHSGQCPCRPGALGRQCNSCDSPFAEVTASGCRV) is the Laminin EGF-like domain. Y2126 is modified (phosphotyrosine). Residues N2177, N2196, N2386, N2474, and N2506 are each glycosylated (N-linked (GlcNAc...) asparagine). The tract at residues 2361 to 2399 (THVLLPSQSPRPSPSEVLPTSSSIENSTTSSVVPPPAPP) is disordered. The 163-residue stretch at 2368 to 2530 (QSPRPSPSEV…GVLMDASPRE (163 aa)) folds into the GAIN-B domain. Positions 2380–2391 (TSSSIENSTTSS) are enriched in low complexity. Intrachain disulfides connect C2480-C2512 and C2500-C2514. The segment at 2480–2530 (CVQWDPPGLAEQHGVWTARDCELVHRNGSHARCRCSRTGTFGVLMDASPRE) is GPS. Residues 2541–2561 (VFTHVVVAVSVAALVLTAAIL) traverse the membrane as a helical segment. The Cytoplasmic segment spans residues 2562-2572 (LSLRSLKSNVR). A helical transmembrane segment spans residues 2573–2593 (GIHANVAAALGVAELLFLLGI). Topologically, residues 2594–2601 (HRTHNQLV) are extracellular. A helical transmembrane segment spans residues 2602 to 2622 (CTAVAILLHYFFLSTFAWLFV). At 2623–2643 (QGLHLYRMQVEPRNVDRGAMR) the chain is on the cytoplasmic side. A helical transmembrane segment spans residues 2644–2664 (FYHALGWGVPAVLLGLAVGLD). The Extracellular portion of the chain corresponds to 2665-2681 (PEGYGNPDFCWISVHEP). A helical transmembrane segment spans residues 2682-2702 (LIWSFAGPVVLVIVMNGTMFL). The Cytoplasmic portion of the chain corresponds to 2703–2725 (LAARTSCSTGQREAKKTSALTLR). The chain crosses the membrane as a helical span at residues 2726 to 2746 (SSFLLLLLVSASWLFGLLAVN). Over 2747 to 2753 (HSILAFH) the chain is Extracellular. The helical transmembrane segment at 2754–2774 (YLHAGLCGLQGLAVLLLFCVL) threads the bilayer. Topologically, residues 2775–3312 (NADARAAWMP…SEVPRSEGHS (538 aa)) are cytoplasmic. Disordered stretches follow at residues 2888 to 2927 (AGAD…QRPL) and 2978 to 3006 (TSKD…AQRQ). A compositionally biased stretch (acidic residues) spans 2890–2900 (ADSDSDSDLSL). Position 3051 is a phosphotyrosine (Y3051). Disordered stretches follow at residues 3086–3243 (EEAP…TEQL) and 3256–3312 (SALS…EGHS). At S3097 the chain carries Phosphoserine. Low complexity-rich tracts occupy residues 3175-3198 (SPQR…SRSS), 3256-3265 (SALSSVQSSS), and 3272-3281 (TTATPSATAS). Residues 3287 to 3300 (TPRSATSHSISELS) are compositionally biased toward polar residues.

This sequence belongs to the G-protein coupled receptor 2 family. LN-TM7 subfamily.

It localises to the cell membrane. Functionally, receptor that may have an important role in cell/cell signaling during nervous system formation. The chain is Cadherin EGF LAG seven-pass G-type receptor 3 (CELSR3) from Homo sapiens (Human).